The chain runs to 183 residues: UPF0397 protein stu0306/stu0307 (183 aa).

The next 5 helical transmembrane spans lie at 11-31 (ATGIGAALFIIICIFVNIPIF), 44-64 (VLFSVIFGSRSIIGFFMGFIG), 74-94 (GDISWAWVLASGITGLVIGLF), 111-131 (IWFNLAQALGLLIAYGVVTPI), and 149-169 (FVAGVANFITIAIGGTLLLAI).

The protein belongs to the UPF0397 family.

It is found in the cell membrane. The chain is UPF0397 protein stu0306/stu0307 from Streptococcus thermophilus (strain ATCC BAA-250 / LMG 18311).